We begin with the raw amino-acid sequence, 563 residues long: Endogenous retroviral envelope protein HEMO (563 aa).

An N-terminal signal peptide occupies residues 1–26 (MGSLSNYALLQLTLTAFLTILVQPQH). The Extracellular segment spans residues 27–488 (LLAPVFRTLS…IFAKVGDWFR (462 aa)). 2 N-linked (GlcNAc...) asparagine glycosylation sites follow: N122 and N192. Residues 489 to 509 (SWGYVLLIVLFCLFIFVLIYV) traverse the membrane as a helical segment. At 510-563 (RVFRKSRRSLNSQPLNLALSPQQSAQLLVSETSCQVSNRAMKGLTTHQYDTSLL) the chain is on the cytoplasmic side.

This sequence belongs to the gamma type-C retroviral envelope protein family. In terms of processing, N-glycosylated. Post-translationally, cleaved by some metalloproteinase at 432-Gln-Arg-433 (mainly) or 433-Arg-Gln-434, leading to release the secreted form (Endogenous retroviral envelope protein HEMO, secreted form) in the extracellular medium. As to expression, expressed at high level in the placenta and stem cells (at protein level). Also expressed in the kidney but at a lower level. Endogenous retroviral envelope protein HEMO, secreted form: Present in the blood of pregnant women (at protein level).

It is found in the cell membrane. The protein localises to the secreted. Endogenous envelope proteins originate from retroviral envelope proteins, which mediate receptor recognition and membrane fusion during early infection. Endogenous envelope proteins may have kept, lost or modified their original function during evolution. The sequence is that of Endogenous retroviral envelope protein HEMO from Homo sapiens (Human).